The following is a 225-amino-acid chain: Uracil-DNA glycosylase (225 aa).

Catalysis depends on Asp-65, which acts as the Proton acceptor.

This sequence belongs to the uracil-DNA glycosylase (UDG) superfamily. UNG family.

The protein resides in the cytoplasm. The catalysed reaction is Hydrolyzes single-stranded DNA or mismatched double-stranded DNA and polynucleotides, releasing free uracil.. Its function is as follows. Excises uracil residues from the DNA which can arise as a result of misincorporation of dUMP residues by DNA polymerase or due to deamination of cytosine. This is Uracil-DNA glycosylase from Clostridium beijerinckii (strain ATCC 51743 / NCIMB 8052) (Clostridium acetobutylicum).